A 99-amino-acid chain; its full sequence is MGNMQGMMKQMQKMQKEMQAAQRELYATEFEGKSASDMVTVKFTGEKIMKDIQIKPEAIDPDDPDMLQDLIIEAVNQAMGTIDKETQDKMGKYTRGLPM.

Belongs to the YbaB/EbfC family. In terms of assembly, homodimer.

The protein resides in the cytoplasm. The protein localises to the nucleoid. Its function is as follows. Binds to DNA and alters its conformation. May be involved in regulation of gene expression, nucleoid organization and DNA protection. In Lacticaseibacillus casei (strain BL23) (Lactobacillus casei), this protein is Nucleoid-associated protein LCABL_24440.